A 95-amino-acid chain; its full sequence is N(2)-fixation sustaining protein CowN (95 aa).

The protein belongs to the CowN family.

Is required to sustain N(2)-dependent growth in the presence of low levels of carbon monoxide (CO). Probably acts by protecting the N(2) fixation ability of the nitrogenase complex, which is inactivated in the presence of CO. This is N(2)-fixation sustaining protein CowN from Allochromatium vinosum (strain ATCC 17899 / DSM 180 / NBRC 103801 / NCIMB 10441 / D) (Chromatium vinosum).